Reading from the N-terminus, the 226-residue chain is 3-dehydroquinate dehydratase (226 aa).

Residues 29–31 (EFR) and Arg56 each bind 3-dehydroquinate. The active-site Proton donor/acceptor is the His120. Lys146 acts as the Schiff-base intermediate with substrate in catalysis. 3-dehydroquinate-binding residues include Arg187, Thr208, and Gln212.

This sequence belongs to the type-I 3-dehydroquinase family. Homodimer.

The enzyme catalyses 3-dehydroquinate = 3-dehydroshikimate + H2O. It functions in the pathway metabolic intermediate biosynthesis; chorismate biosynthesis; chorismate from D-erythrose 4-phosphate and phosphoenolpyruvate: step 3/7. Functionally, involved in the third step of the chorismate pathway, which leads to the biosynthesis of aromatic amino acids. Catalyzes the cis-dehydration of 3-dehydroquinate (DHQ) and introduces the first double bond of the aromatic ring to yield 3-dehydroshikimate. The protein is 3-dehydroquinate dehydratase of Halobacterium salinarum (strain ATCC 700922 / JCM 11081 / NRC-1) (Halobacterium halobium).